Here is a 277-residue protein sequence, read N- to C-terminus: MEMO1 family protein Tpet_0837 (277 aa).

Belongs to the MEMO1 family.

This Thermotoga petrophila (strain ATCC BAA-488 / DSM 13995 / JCM 10881 / RKU-1) protein is MEMO1 family protein Tpet_0837.